The sequence spans 182 residues: Small ribosomal subunit protein uS4 (182 aa).

Disordered stretches follow at residues 1 to 23 and 158 to 182; these read MGHPKKPRKQYDTPSHPWNADRI and SSVAKQFETQETEEVAAEEEPKDEE. In terms of domain architecture, S4 RNA-binding spans 103-170; the sequence is RRLQSLVFKR…AKQFETQETE (68 aa). Positions 167–182 are enriched in acidic residues; that stretch reads QETEEVAAEEEPKDEE.

The protein belongs to the universal ribosomal protein uS4 family. As to quaternary structure, part of the 30S ribosomal subunit. Contacts protein S5. The interaction surface between S4 and S5 is involved in control of translational fidelity.

Functionally, one of the primary rRNA binding proteins, it binds directly to 16S rRNA where it nucleates assembly of the body of the 30S subunit. With S5 and S12 plays an important role in translational accuracy. This chain is Small ribosomal subunit protein uS4, found in Methanosphaera stadtmanae (strain ATCC 43021 / DSM 3091 / JCM 11832 / MCB-3).